Reading from the N-terminus, the 467-residue chain is Chromosomal replication initiator protein DnaA (467 aa).

Residues 1 to 84 are domain I, interacts with DnaA modulators; the sequence is MDISLDQLWD…LQVEFSVSPH (84 aa). The tract at residues 84-125 is domain II; sequence HASVEAEPPSRAISPTSGRAGSLPASTTLGLEVGGSLPMRAP. The interval 89-108 is disordered; the sequence is AEPPSRAISPTSGRAGSLPA. The segment covering 96–108 has biased composition (polar residues); that stretch reads ISPTSGRAGSLPA. The segment at 126–342 is domain III, AAA+ region; that stretch reads DLNPKYSFSR…GALIRAVAYV (217 aa). G170, G172, K173, and T174 together coordinate ATP. Residues 343–467 are domain IV, binds dsDNA; sequence SISGLPMSVE…LRVVANSRSS (125 aa).

It belongs to the DnaA family. As to quaternary structure, oligomerizes as a right-handed, spiral filament on DNA at oriC.

It is found in the cytoplasm. In terms of biological role, plays an essential role in the initiation and regulation of chromosomal replication. ATP-DnaA binds to the origin of replication (oriC) to initiate formation of the DNA replication initiation complex once per cell cycle. Binds the DnaA box (a 9 base pair repeat at the origin) and separates the double-stranded (ds)DNA. Forms a right-handed helical filament on oriC DNA; dsDNA binds to the exterior of the filament while single-stranded (ss)DNA is stabiized in the filament's interior. The ATP-DnaA-oriC complex binds and stabilizes one strand of the AT-rich DNA unwinding element (DUE), permitting loading of DNA polymerase. After initiation quickly degrades to an ADP-DnaA complex that is not apt for DNA replication. Binds acidic phospholipids. This chain is Chromosomal replication initiator protein DnaA, found in Synechococcus sp. (strain JA-2-3B'a(2-13)) (Cyanobacteria bacterium Yellowstone B-Prime).